Consider the following 318-residue polypeptide: tRNA U34 carboxymethyltransferase (318 aa).

Carboxy-S-adenosyl-L-methionine is bound by residues lysine 88, tryptophan 102, lysine 107, glycine 126, methionine 192, tyrosine 196, and arginine 311.

The protein belongs to the class I-like SAM-binding methyltransferase superfamily. CmoB family. In terms of assembly, homotetramer.

The catalysed reaction is carboxy-S-adenosyl-L-methionine + 5-hydroxyuridine(34) in tRNA = 5-carboxymethoxyuridine(34) in tRNA + S-adenosyl-L-homocysteine + H(+). Its function is as follows. Catalyzes carboxymethyl transfer from carboxy-S-adenosyl-L-methionine (Cx-SAM) to 5-hydroxyuridine (ho5U) to form 5-carboxymethoxyuridine (cmo5U) at position 34 in tRNAs. The protein is tRNA U34 carboxymethyltransferase of Pseudomonas fluorescens (strain Pf0-1).